The sequence spans 1040 residues: MSYNNRSGGGASGGYSRRGYHGSHRGGYRTGRSKYPEDRYLVGGMLSLNKGSHYESSDNRYIPNEIGSKSPENRSHRSSTKDGRTPSGLSTPLSSSDKVSTPISIESINGSDRNTGVNNKDSEFPKLSHHSDFTSTIPFSRSINPQKNFMVINDSHTPKTDKGIQSKKIRYNGEGVNHVSDPRIAQSNSNLQKPTKKTKKTPYKQLPQPKFVYNSDSLGPAPMSTIIIWDLPISTSEPFLRNFVSRYGNPLEEMTFITDPTTAVPLGIVTFKFQGNPQKASELAKNFIKTVRQDELKIDGATLKIALNDNENQLLNRKLESAKKKMLQQRLQREQEEEKRRQKLVEEQKKQELLKKKEKEHQESVKKEKSVEHESTIVSTRDKNLVYKPNSTVLSMRHNHKIISSVILPKDLEKYIKSRPYILIRDKYVPTKKISSHDIKRALKKYDWTRVLSDKSGFFIVFNSLNECERCFLNEDNKKFFEYKLVMEMAIPEGFTNNIRENESKSTNDVLDEATNILIKEFQTFLAKDIRERIIAPNILDLLAHDKYPELVEELKSREQAAKPKVLVTNNQLKENALSILEKQRQLFQQRLPSFRMSHDRTQQHKPKRRNSIIPMQHALNFDDDEDSESHSQSESEDEDEDETTASRPLTPVVSTMKRERSSTITSIEDDIELEEREIKKQKVKVPAIEAEIAPESSPEEGEEEEKEEVEIKQEAEEVDIKFQPTEESPRTVYPEIPFSGDFDLNALQHTIKDSEDLLLAQEVLSETTPSGLSNIEYWSWKSKNRKDVQEISQEEEYIEELPESLQSTTGSFKSEGVRKIPEIEKIGYLPHRKRTNKPIKTIQYEDEDEEKPNENTNAVQSSRVNRANNRRFAADITAQIGSESDVLSLNALTKRKKPVTFARSAIHNWGLYAMEPIAAKEMIIEYVGERIRQQVAEHREKSYLKTGIGSSYLFRIDDNTVIDATKKGGIARFINHCCSPSCTAKIIKVEGKKRIVIYALRDIEANEELTYDYKFERETNDEERIRCLCGAPGCKGYLN.

5 disordered regions span residues 1–129 (MSYN…KLSH), 175–202 (GVNHVSDPRIAQSNSNLQKPTKKTKKTP), 353–374 (LLKKKEKEHQESVKKEKSVEHE), 591–664 (RLPS…RSST), and 692–737 (EIAP…YPEI). The segment covering 18–27 (RGYHGSHRGG) has biased composition (basic residues). Basic and acidic residues predominate over residues 71–84 (PENRSHRSSTKDGR). Low complexity predominate over residues 85-96 (TPSGLSTPLSSS). A compositionally biased stretch (polar residues) spans 97–119 (DKVSTPISIESINGSDRNTGVNN). A compositionally biased stretch (basic and acidic residues) spans 120-129 (KDSEFPKLSH). Acidic residues-rich tracts occupy residues 635–644 (ESEDEDEDET) and 698–709 (SPEEGEEEEKEE). Basic and acidic residues predominate over residues 710 to 721 (VEIKQEAEEVDI). Residues 867 to 872 (RANNRR) carry the RxxxRR motif motif. The SET domain maps to 898–1015 (KPVTFARSAI…ANEELTYDYK (118 aa)). Tyrosine 1014 is a binding site for S-adenosyl-L-methionine. A Post-SET domain is found at 1024–1040 (ERIRCLCGAPGCKGYLN).

Belongs to the class V-like SAM-binding methyltransferase superfamily. Component of the Set1C/COMPASS complex.

It is found in the nucleus. The protein resides in the chromosome. It catalyses the reaction L-lysyl(4)-[histone H3] + 3 S-adenosyl-L-methionine = N(6),N(6),N(6)-trimethyl-L-lysyl(4)-[histone H3] + 3 S-adenosyl-L-homocysteine + 3 H(+). The catalysed reaction is N(6)-methyl-L-lysyl(4)-[histone H3] + S-adenosyl-L-methionine = N(6),N(6)-dimethyl-L-lysyl(4)-[histone H3] + S-adenosyl-L-homocysteine + H(+). The enzyme catalyses N(6),N(6)-dimethyl-L-lysyl(4)-[histone H3] + S-adenosyl-L-methionine = N(6),N(6),N(6)-trimethyl-L-lysyl(4)-[histone H3] + S-adenosyl-L-homocysteine + H(+). Catalytic component of the COMPASS (Set1C) complex that specifically mono-, di- and trimethylates histone H3 to form H3K4me1/2/3. Binds RNAs which might negatively affect its histone methyltransferase activity. COMPASS recognizes ubiquitinated H2B on one face of the nucleosome which stimulates the methylation of H3 on the opposing face. Plays a role in the pathogenesis of invasive candidiasis. In Candida albicans (strain SC5314 / ATCC MYA-2876) (Yeast), this protein is Histone-lysine N-methyltransferase, H3 lysine-4 specific (SET1).